Reading from the N-terminus, the 442-residue chain is Tubulin beta chain (442 aa).

Gln11, Glu69, Ser138, Gly142, Thr143, Gly144, Asn204, and Asn226 together coordinate GTP. Glu69 provides a ligand contact to Mg(2+).

Belongs to the tubulin family. Dimer of alpha and beta chains. A typical microtubule is a hollow water-filled tube with an outer diameter of 25 nm and an inner diameter of 15 nM. Alpha-beta heterodimers associate head-to-tail to form protofilaments running lengthwise along the microtubule wall with the beta-tubulin subunit facing the microtubule plus end conferring a structural polarity. Microtubules usually have 13 protofilaments but different protofilament numbers can be found in some organisms and specialized cells. It depends on Mg(2+) as a cofactor.

It localises to the cytoplasm. The protein localises to the cytoskeleton. In terms of biological role, tubulin is the major constituent of microtubules, a cylinder consisting of laterally associated linear protofilaments composed of alpha- and beta-tubulin heterodimers. Microtubules grow by the addition of GTP-tubulin dimers to the microtubule end, where a stabilizing cap forms. Below the cap, tubulin dimers are in GDP-bound state, owing to GTPase activity of alpha-tubulin. The polypeptide is Tubulin beta chain (TUB-B) (Pneumocystis carinii).